The chain runs to 683 residues: uncharacterized protein (683 aa).

3 coiled-coil regions span residues 62–124 (PEHY…RKER), 155–259 (TTTN…KLSQ), and 346–376 (KKSL…DGDV). The interval 213 to 237 (QDQVESQTGPKKRRKSPIENQPTAG) is disordered.

This is an uncharacterized protein from Invertebrate iridescent virus 3 (IIV-3).